The primary structure comprises 156 residues: Small ribosomal subunit protein uS7c (156 aa).

This sequence belongs to the universal ribosomal protein uS7 family. Part of the 30S ribosomal subunit.

The protein localises to the plastid. It localises to the chloroplast. Functionally, one of the primary rRNA binding proteins, it binds directly to 16S rRNA where it nucleates assembly of the head domain of the 30S subunit. The protein is Small ribosomal subunit protein uS7c (rps7) of Pyropia yezoensis (Susabi-nori).